The chain runs to 325 residues: Cytochrome c biogenesis protein CcsA (325 aa).

8 consecutive transmembrane segments (helical) span residues 12-32 (HISF…LLFV), 45-65 (GMII…VFSG), 72-92 (LYES…VPYF), 100-120 (LNTI…SGLL), 145-165 (MILG…ILVI), 231-251 (TISL…VWAN), 264-281 (ETWA…LHTR), and 293-313 (IVAS…NLLG).

This sequence belongs to the CcmF/CycK/Ccl1/NrfE/CcsA family. May interact with Ccs1.

It localises to the plastid. It is found in the chloroplast thylakoid membrane. Its function is as follows. Required during biogenesis of c-type cytochromes (cytochrome c6 and cytochrome f) at the step of heme attachment. The chain is Cytochrome c biogenesis protein CcsA from Glycine max (Soybean).